The primary structure comprises 473 residues: Ribulose bisphosphate carboxylase large chain (473 aa).

Substrate contacts are provided by Asn116 and Thr166. Lys168 acts as the Proton acceptor in catalysis. Lys170 lines the substrate pocket. Residues Lys194, Asp196, and Glu197 each coordinate Mg(2+). An N6-carboxylysine modification is found at Lys194. The active-site Proton acceptor is His287. Substrate-binding residues include Arg288, His320, and Ser372.

It belongs to the RuBisCO large chain family. Type I subfamily. Heterohexadecamer of 8 large chains and 8 small chains. Requires Mg(2+) as cofactor.

It catalyses the reaction 2 (2R)-3-phosphoglycerate + 2 H(+) = D-ribulose 1,5-bisphosphate + CO2 + H2O. The enzyme catalyses D-ribulose 1,5-bisphosphate + O2 = 2-phosphoglycolate + (2R)-3-phosphoglycerate + 2 H(+). In terms of biological role, ruBisCO catalyzes two reactions: the carboxylation of D-ribulose 1,5-bisphosphate, the primary event in carbon dioxide fixation, as well as the oxidative fragmentation of the pentose substrate. Both reactions occur simultaneously and in competition at the same active site. The polypeptide is Ribulose bisphosphate carboxylase large chain (Nitrosospira sp. (strain TCH716)).